Here is a 660-residue protein sequence, read N- to C-terminus: Arginine--tRNA ligase, cytoplasmic (660 aa).

Positions 1–72 (MELPVCFYEE…LEEKKKSSKS (72 aa)) are could be involved in the assembly of the multisynthetase complex. L-arginine-binding positions include 200 to 202 (SPN), histidine 211, tyrosine 384, aspartate 388, and glutamine 412. The 'HIGH' region motif lies at 201–212 (PNIAKEMHVGHL). An interaction with tRNA region spans residues 529–543 (NTAAYLLYAYTRIRS).

Belongs to the class-I aminoacyl-tRNA synthetase family. Monomer; also part of a multisubunit complex that groups tRNA ligases for Arg, Asp, Glu, Gln, Ile, Leu, Lys, Met and Pro.

The protein resides in the cytoplasm. Its subcellular location is the cytosol. The catalysed reaction is tRNA(Arg) + L-arginine + ATP = L-arginyl-tRNA(Arg) + AMP + diphosphate. In terms of biological role, forms part of a macromolecular complex that catalyzes the attachment of specific amino acids to cognate tRNAs during protein synthesis. The polypeptide is Arginine--tRNA ligase, cytoplasmic (rars1) (Xenopus tropicalis (Western clawed frog)).